Reading from the N-terminus, the 617-residue chain is UvrABC system protein C (617 aa).

Residues 22 to 100 form the GIY-YIG domain; the sequence is KLPGVYRFFD…IKALSPKYNI (79 aa). The UVR domain occupies 209 to 244; it reads DELTRTLQHKMQTAAANLQFEEAARYRDQIQALGIM.

Belongs to the UvrC family. As to quaternary structure, interacts with UvrB in an incision complex.

It localises to the cytoplasm. In terms of biological role, the UvrABC repair system catalyzes the recognition and processing of DNA lesions. UvrC both incises the 5' and 3' sides of the lesion. The N-terminal half is responsible for the 3' incision and the C-terminal half is responsible for the 5' incision. The polypeptide is UvrABC system protein C (Neisseria meningitidis serogroup A / serotype 4A (strain DSM 15465 / Z2491)).